A 176-amino-acid polypeptide reads, in one-letter code: ATP-dependent protease subunit HslV (176 aa).

Thr6 is a catalytic residue. Na(+) contacts are provided by Ser161, Cys164, and Thr167.

It belongs to the peptidase T1B family. HslV subfamily. A double ring-shaped homohexamer of HslV is capped on each side by a ring-shaped HslU homohexamer. The assembly of the HslU/HslV complex is dependent on binding of ATP.

It is found in the cytoplasm. It carries out the reaction ATP-dependent cleavage of peptide bonds with broad specificity.. Its activity is regulated as follows. Allosterically activated by HslU binding. In terms of biological role, protease subunit of a proteasome-like degradation complex believed to be a general protein degrading machinery. The chain is ATP-dependent protease subunit HslV from Aquifex aeolicus (strain VF5).